Reading from the N-terminus, the 305-residue chain is Serine/threonine-protein phosphatase PP-X homolog 3 (305 aa).

Residues Asp-53, His-55, Asp-81, and Asn-113 each coordinate Mn(2+). The Proton donor role is filled by His-114. Positions 163 and 237 each coordinate Mn(2+).

Belongs to the PPP phosphatase family. PP-4 (PP-X) subfamily. Mn(2+) is required as a cofactor.

The enzyme catalyses O-phospho-L-seryl-[protein] + H2O = L-seryl-[protein] + phosphate. It carries out the reaction O-phospho-L-threonyl-[protein] + H2O = L-threonyl-[protein] + phosphate. The protein is Serine/threonine-protein phosphatase PP-X homolog 3 (Ppx3) of Paramecium tetraurelia.